Consider the following 141-residue polypeptide: Head virion protein G6P (141 aa).

Helical transmembrane passes span 3-23 (WLSGFLDQIIAFFQWIWDFFA), 33-53 (GLVVATKASMYAALQTLILLI), and 80-100 (LPGPIAAGLAFFGVPQALNII).

The protein belongs to the inovirus G6P protein family. Interacts with G3P; this interaction is required for proper integration of G3P and G6P into the virion.

The protein resides in the virion. Its subcellular location is the host membrane. Plays essential roles both in the entry of the viral genome into the bacterial host and in budding process. The formation of the G3P-G6P complex termed adsorption complex is essential for correct termination of filamentous phage assembly. This Pseudomonas phage Pf1 (Bacteriophage Pf1) protein is Head virion protein G6P (VI).